A 256-amino-acid polypeptide reads, in one-letter code: DNA repair protein RecO (256 aa).

This sequence belongs to the RecO family.

Involved in DNA repair and RecF pathway recombination. The chain is DNA repair protein RecO from Rhizobium etli (strain CIAT 652).